A 119-amino-acid polypeptide reads, in one-letter code: Flagellar transcriptional regulator FlhD (119 aa).

This sequence belongs to the FlhD family. In terms of assembly, homodimer; disulfide-linked. Forms a heterohexamer composed of two FlhC and four FlhD subunits. Each FlhC binds a FlhD dimer, forming a heterotrimer, and a hexamer assembles by dimerization of two heterotrimers.

It localises to the cytoplasm. Functions in complex with FlhC as a master transcriptional regulator that regulates transcription of several flagellar and non-flagellar operons by binding to their promoter region. Activates expression of class 2 flagellar genes, including fliA, which is a flagellum-specific sigma factor that turns on the class 3 genes. Also regulates genes whose products function in a variety of physiological pathways. This Pectobacterium atrosepticum (strain SCRI 1043 / ATCC BAA-672) (Erwinia carotovora subsp. atroseptica) protein is Flagellar transcriptional regulator FlhD.